Here is a 545-residue protein sequence, read N- to C-terminus: Tripartite motif-containing protein 55 (545 aa).

The segment at 26-82 adopts an RING-type zinc-finger fold; that stretch reads CPICLEMFTKPVVILPCQHNLCRKCASDIFQASNPYLPTRGGTTVASGGRFRCPSCR. Residues 119-161 form a B box-type zinc finger; it reads LDQPMCEEHEEERINIYCLNCEVPTCSLCKVFGAHKDCQVAPL. Positions 124, 127, 147, and 153 each coordinate Zn(2+). Positions 219–258 form a coiled coil; sequence YSILEERKTEMTQAITRTQEEKLEHVRTLIRKYSDHLENV. The 59-residue stretch at 269–327 folds into the COS domain; sequence MDEPEMAVFLQNAKTLLQKITEASKAFQMEKIEQGYEIMNNFTVNLNREEKIIREIDFS. Disordered regions lie at residues 324-378 and 406-528; these read IDFS…SELA and LVTQ…GADS. Residues 328–355 show a composition bias toward acidic residues; the sequence is REEEDEDDEGEVDEEGEGEDAVEVEEAE. Composition is skewed to low complexity over residues 417–426 and 469–493; these read SQQTTQSETS and SAAEDSSVQSAEVAEAAANEQAAVS. The span at 495-506 shows a compositional bias: polar residues; that stretch reads KESSSTAATSQI. The segment covering 510-520 has biased composition (low complexity); it reads ASSPQGQAAAL.

In terms of assembly, homooligomer and heterooligomer. Interacts with titin/TTN. Interacts with myosins. Interacts with SQSTM1 and NBR1. Probably interacts with TRIM63 and TRIM54. In terms of processing, targeted for degradation through the proteasomal and lysosomal pathways in the presence of SUMO3.

The protein resides in the nucleus. Its subcellular location is the cytoplasm. It carries out the reaction S-ubiquitinyl-[E2 ubiquitin-conjugating enzyme]-L-cysteine + [acceptor protein]-L-lysine = [E2 ubiquitin-conjugating enzyme]-L-cysteine + N(6)-ubiquitinyl-[acceptor protein]-L-lysine.. In terms of biological role, E3 ubiquitin ligase that plays an important role in regulating cardiac development and contractility, muscle growth, metabolism, and fiber-type differentiation. Acts as a critical factor that regulates cardiomyocyte size during development in concert with TRIM63 by regulating E2F1-mediated gene expression. Plays a role in apoptosis induction in cardiomyocytes by promoting ubiquitination of the DUSP1 phosphatase. Promotes non-canonical NF-kappa-B signaling and B-cell-mediated immune responses by mediating NFKB2 'Lys-48'-linked ubiquitination and processing. In turn, NFKB2 is further processed by valosin-containing protein/VCP, an ATPase that mediates ubiquitin-dependent protein degradation by the proteasome. May play a role in preventing macrophages from producing inflammatory factors and migrating by downregulating the level of nuclear NF-kappa-B subunit RELA. Also modifies PPARG via polyubiquitination and accelerates PPARG proteasomal degradation to inhibit its activity. The chain is Tripartite motif-containing protein 55 (Trim55) from Rattus norvegicus (Rat).